A 385-amino-acid chain; its full sequence is Probable tRNA sulfurtransferase (385 aa).

Residues 57–160 (DGVIERVKKV…RGNAYVFTDK (104 aa)) form the THUMP domain. ATP is bound by residues 180–181 (ML), 205–206 (YY), arginine 262, glycine 284, and glutamine 293.

It belongs to the ThiI family.

It localises to the cytoplasm. The enzyme catalyses [ThiI sulfur-carrier protein]-S-sulfanyl-L-cysteine + a uridine in tRNA + 2 reduced [2Fe-2S]-[ferredoxin] + ATP + H(+) = [ThiI sulfur-carrier protein]-L-cysteine + a 4-thiouridine in tRNA + 2 oxidized [2Fe-2S]-[ferredoxin] + AMP + diphosphate. The catalysed reaction is [ThiS sulfur-carrier protein]-C-terminal Gly-Gly-AMP + S-sulfanyl-L-cysteinyl-[cysteine desulfurase] + AH2 = [ThiS sulfur-carrier protein]-C-terminal-Gly-aminoethanethioate + L-cysteinyl-[cysteine desulfurase] + A + AMP + 2 H(+). Its pathway is cofactor biosynthesis; thiamine diphosphate biosynthesis. In terms of biological role, catalyzes the ATP-dependent transfer of a sulfur to tRNA to produce 4-thiouridine in position 8 of tRNAs, which functions as a near-UV photosensor. Also catalyzes the transfer of sulfur to the sulfur carrier protein ThiS, forming ThiS-thiocarboxylate. This is a step in the synthesis of thiazole, in the thiamine biosynthesis pathway. The sulfur is donated as persulfide by IscS. This is Probable tRNA sulfurtransferase from Clostridium perfringens (strain 13 / Type A).